A 327-amino-acid chain; its full sequence is Interleukin-12 subunit beta (327 aa).

The first 22 residues, Met-1 to Ala-22, serve as a signal peptide directing secretion. Residues Met-23 to Lys-106 form the Ig-like C2-type domain. Residues Cys-50 and Cys-90 are joined by a disulfide bond. A glycan (N-linked (GlcNAc...) asparagine) is linked at Asn-223. In terms of domain architecture, Fibronectin type-III spans Pro-238–Ser-327.

This sequence belongs to the IL-12B family. As to quaternary structure, heterodimer with IL12A; disulfide-linked. The heterodimer is known as interleukin IL-12. Heterodimer with IL23A; disulfide-linked. The heterodimer is known as interleukin IL-23. Also secreted as a monomer. Interacts with NBR1; this interaction promotes IL-12 secretion.

It localises to the secreted. Its function is as follows. Cytokine that can act as a growth factor for activated T and NK cells, enhance the lytic activity of NK/lymphokine-activated killer cells, and stimulate the production of IFN-gamma by resting PBMC. In terms of biological role, associates with IL23A to form the IL-23 interleukin, a heterodimeric cytokine which functions in innate and adaptive immunity. IL-23 may constitute with IL-17 an acute response to infection in peripheral tissues. IL-23 binds to a heterodimeric receptor complex composed of IL12RB1 and IL23R, activates the Jak-Stat signaling cascade, stimulates memory rather than naive T-cells and promotes production of pro-inflammatory cytokines. IL-23 induces autoimmune inflammation and thus may be responsible for autoimmune inflammatory diseases and may be important for tumorigenesis. This chain is Interleukin-12 subunit beta (IL12B), found in Bos taurus (Bovine).